The chain runs to 900 residues: DNA mismatch repair protein MutS (900 aa).

637–644 lines the ATP pocket; that stretch reads GPNMAGKS.

This sequence belongs to the DNA mismatch repair MutS family.

Functionally, this protein is involved in the repair of mismatches in DNA. It is possible that it carries out the mismatch recognition step. This protein has a weak ATPase activity. The polypeptide is DNA mismatch repair protein MutS (Methanosarcina mazei (strain ATCC BAA-159 / DSM 3647 / Goe1 / Go1 / JCM 11833 / OCM 88) (Methanosarcina frisia)).